Consider the following 188-residue polypeptide: RWD domain-containing protein 4 (188 aa).

Residues 9-111 (MELEALRSIY…EYAKDHKEQF (103 aa)) enclose the RWD domain. A disordered region spans residues 132–167 (TPTTAPSSKKKEKKEQLSKAQKRKLADKTDHKGELP). Residues 155–166 (KLADKTDHKGEL) show a composition bias toward basic and acidic residues.

The protein is RWD domain-containing protein 4 (Rwdd4) of Mus musculus (Mouse).